The chain runs to 95 residues: Bombyxin F-1 (95 aa).

The first 19 residues, 1–19 (MKLVVIVLLVISVSILVSA), serve as a signal peptide directing secretion. Disulfide bonds link cysteine 29–cysteine 82, cysteine 41–cysteine 95, and cysteine 81–cysteine 86. Residues 53–71 (NSDMVYEDSGMPELLPADT) constitute a propeptide, c peptide like.

Belongs to the insulin family. As to quaternary structure, heterodimer of a B chain and an A chain linked by two disulfide bonds.

The protein localises to the secreted. The protein is Bombyxin F-1 (BBXF1) of Bombyx mori (Silk moth).